A 350-amino-acid polypeptide reads, in one-letter code: UDP-3-O-acylglucosamine N-acyltransferase (350 aa).

The active-site Proton acceptor is the histidine 248.

It belongs to the transferase hexapeptide repeat family. LpxD subfamily. Homotrimer.

The catalysed reaction is a UDP-3-O-[(3R)-3-hydroxyacyl]-alpha-D-glucosamine + a (3R)-hydroxyacyl-[ACP] = a UDP-2-N,3-O-bis[(3R)-3-hydroxyacyl]-alpha-D-glucosamine + holo-[ACP] + H(+). Its pathway is bacterial outer membrane biogenesis; LPS lipid A biosynthesis. Its function is as follows. Catalyzes the N-acylation of UDP-3-O-acylglucosamine using 3-hydroxyacyl-ACP as the acyl donor. Is involved in the biosynthesis of lipid A, a phosphorylated glycolipid that anchors the lipopolysaccharide to the outer membrane of the cell. The sequence is that of UDP-3-O-acylglucosamine N-acyltransferase from Nostoc punctiforme (strain ATCC 29133 / PCC 73102).